A 320-amino-acid polypeptide reads, in one-letter code: Beta-ketoacyl-[acyl-carrier-protein] synthase III (320 aa).

Catalysis depends on residues Cys112 and His245. The tract at residues 246–250 (QANIR) is ACP-binding. Residue Asn275 is part of the active site.

Belongs to the thiolase-like superfamily. FabH family. Homodimer.

It is found in the cytoplasm. It carries out the reaction malonyl-[ACP] + acetyl-CoA + H(+) = 3-oxobutanoyl-[ACP] + CO2 + CoA. It functions in the pathway lipid metabolism; fatty acid biosynthesis. Its function is as follows. Catalyzes the condensation reaction of fatty acid synthesis by the addition to an acyl acceptor of two carbons from malonyl-ACP. Catalyzes the first condensation reaction which initiates fatty acid synthesis and may therefore play a role in governing the total rate of fatty acid production. Possesses both acetoacetyl-ACP synthase and acetyl transacylase activities. Its substrate specificity determines the biosynthesis of branched-chain and/or straight-chain of fatty acids. In Streptococcus thermophilus (strain CNRZ 1066), this protein is Beta-ketoacyl-[acyl-carrier-protein] synthase III.